The chain runs to 478 residues: Trigger factor (478 aa).

A PPIase FKBP-type domain is found at G162 to P243. The tract at residues K424 to K478 is disordered. The segment covering E448 to K478 has biased composition (acidic residues).

It belongs to the FKBP-type PPIase family. Tig subfamily.

It localises to the cytoplasm. The catalysed reaction is [protein]-peptidylproline (omega=180) = [protein]-peptidylproline (omega=0). Its function is as follows. Involved in protein export. Acts as a chaperone by maintaining the newly synthesized protein in an open conformation. Functions as a peptidyl-prolyl cis-trans isomerase. The sequence is that of Trigger factor from Mycobacterium sp. (strain KMS).